The following is a 57-amino-acid chain: Putative secreted protein ML2569.1 (57 aa).

Positions 1-32 (MSRIVAPAAASVVVGLLLGAATIFGMTLMVQQ) are cleaved as a signal peptide. The tract at residues 34 to 57 (TKPPLPGGDPQSSVLNRVEYGNRT) is disordered.

The polypeptide is Putative secreted protein ML2569.1 (Mycobacterium leprae (strain TN)).